Reading from the N-terminus, the 306-residue chain is Serine/threonine-protein phosphatase 2A catalytic subunit A (306 aa).

Positions 54, 56, 82, and 114 each coordinate Mn(2+). Histidine 115 acts as the Proton donor in catalysis. Residues histidine 164 and histidine 238 each coordinate Mn(2+). Leucine 306 bears the Leucine methyl ester mark.

It belongs to the PPP phosphatase family. PP-2A subfamily. As to quaternary structure, PP2A consists of a trimeric holoenzyme, composed of a 37 kDa catalytic subunit (C subunit) and a 65 kDa constant regulatory subunit (A subunit), that associates with a variety of regulatory subunits (B subunit) such as phr2AB (B55) and psrA (B56 homolog). The trimer may partially dissociates into a core 'AC' dimer equally active compared to the trimer. Requires Mn(2+) as cofactor. Post-translationally, reversibly methyl esterified on Leu-306 by leucine carboxyl methyltransferase 1 (LCMT) and protein phosphatase methylesterase 1 (PPME1). Carboxyl methylation influences the affinity of the catalytic subunit for the different regulatory subunits, thereby modulating the PP2A holoenzyme's substrate specificity, enzyme activity and cellular localization.

It is found in the cytoplasm. Its subcellular location is the cytosol. It localises to the nucleus speckle. It catalyses the reaction O-phospho-L-seryl-[protein] + H2O = L-seryl-[protein] + phosphate. The catalysed reaction is O-phospho-L-threonyl-[protein] + H2O = L-threonyl-[protein] + phosphate. In terms of biological role, plays a role in activating the myosin contractile function. Dephosphorylates threonine at 'Thr-1823', 'Thr-1833' and 'Thr-2029' in the C-terminal tail region of myosin II heavy chain (mhcA). Drives the assembly of dephosphorylated myosin II filaments to allow myosin recruitment into the cytoskeleton. The sequence is that of Serine/threonine-protein phosphatase 2A catalytic subunit A (pho2a) from Dictyostelium discoideum (Social amoeba).